A 73-amino-acid polypeptide reads, in one-letter code: Mu-sparatoxin-Hv2 (73 aa).

The N-terminal stretch at 1–20 (MKFAIVITLLLVAFSAVALA) is a signal peptide. The propeptide occupies 21-35 (DKSIERAVMDLITAR). Disulfide bonds link Cys39–Cys53, Cys46–Cys58, and Cys52–Cys68. Phe72 carries the phenylalanine amide modification.

This sequence belongs to the neurotoxin 10 (Hwtx-1) family. In terms of tissue distribution, expressed by the venom gland.

The protein localises to the secreted. Functionally, insecticidal toxin that potently and irreversibly blocks voltage-gated sodium channels (Nav) in cockroach dorsal unpaired median (DUM) neurons (IC(50)=833.7 nM). It does not change both the steady-state activation and inactivation curves, suggesting it acts as a pore blocker (possibly at Nav site 1). Does not show toxicity when intraperitoneally injected into mouse. In Heteropoda venatoria (Brown huntsman spider), this protein is Mu-sparatoxin-Hv2.